The sequence spans 461 residues: Fumarate hydratase class II (461 aa).

Substrate is bound by residues 97–99 (SGT), 127–130 (HPND), 137–139 (SSN), and T185. Residue H186 is the Proton donor/acceptor of the active site. S316 is an active-site residue. Residues S317 and 322-324 (KVN) each bind substrate.

It belongs to the class-II fumarase/aspartase family. Fumarase subfamily. As to quaternary structure, homotetramer.

It is found in the cytoplasm. It catalyses the reaction (S)-malate = fumarate + H2O. It participates in carbohydrate metabolism; tricarboxylic acid cycle; (S)-malate from fumarate: step 1/1. Its function is as follows. Involved in the TCA cycle. Catalyzes the stereospecific interconversion of fumarate to L-malate. The polypeptide is Fumarate hydratase class II (Oceanobacillus iheyensis (strain DSM 14371 / CIP 107618 / JCM 11309 / KCTC 3954 / HTE831)).